A 141-amino-acid polypeptide reads, in one-letter code: Hemoglobin subunit alpha-A (141 aa).

Residues 1 to 141 (VLSASDKSNV…VGTVLTAKYR (141 aa)) enclose the Globin domain. His58 lines the O2 pocket. His87 is a heme b binding site.

Belongs to the globin family. As to quaternary structure, heterotetramer of two alpha chains and two beta chains. As to expression, red blood cells.

In terms of biological role, involved in oxygen transport from the lung to the various peripheral tissues. The protein is Hemoglobin subunit alpha-A (HBAA) of Streptopelia orientalis (Eastern turtle dove).